A 361-amino-acid polypeptide reads, in one-letter code: Alternative oxidase, mitochondrial (361 aa).

The chain crosses the membrane as a helical span at residues 155–175 (LIRYVFLESVAGVPGMVAGML). 3 residues coordinate Fe cation: glutamate 162, glutamate 201, and histidine 204. The chain crosses the membrane as a helical span at residues 221–241 (MILGAQGVFFNSFFLCYLFSP). Glutamate 252, glutamate 253, glutamate 309, and histidine 312 together coordinate Fe cation. Residues 320 to 361 (GNLKQDEDPNPFVSEYGKERGEKPGKGIESLKPVGWERDEVI) form a disordered region. A compositionally biased stretch (basic and acidic residues) spans 335-345 (YGKERGEKPGK).

The protein belongs to the alternative oxidase family. Fe cation is required as a cofactor.

The protein resides in the mitochondrion inner membrane. Its function is as follows. Catalyzes cyanide-resistant oxygen consumption. May increase respiration when the cytochrome respiratory pathway is restricted, or in response to low temperatures. The protein is Alternative oxidase, mitochondrial (aox) of Botryotinia fuckeliana (Noble rot fungus).